We begin with the raw amino-acid sequence, 639 residues long: Pheromone B alpha 1 receptor (639 aa).

Transmembrane regions (helical) follow at residues 8–28, 37–57, 70–90, 113–133, 163–183, 209–229, and 272–292; these read LFPI…PWHL, FFMM…VAWA, ISIR…LCII, ILVD…LQYI, VWPV…LLQF, MALA…VIVL, and LTRW…GFAE. 4 disordered regions span residues 375–416, 490–516, 532–563, and 611–639; these read PRPM…SSPI, TVPH…SSSA, SADV…RLPS, and TTAG…RASV. Positions 383 to 398 are enriched in low complexity; sequence SSSGFSSSDSTRFGSS. Low complexity-rich tracts occupy residues 541–551 and 611–621; these read GSSAGGVASTS and TTAGAPATTTP.

It belongs to the G-protein coupled receptor 4 family.

It localises to the membrane. In terms of biological role, receptor for the BAP1 pheromone, a prenylated mating factor. Has a role in the initiation of B-regulated nuclear migration. This is Pheromone B alpha 1 receptor (BAR1) from Schizophyllum commune (Split gill fungus).